The primary structure comprises 315 residues: Tyrosine recombinase XerC (315 aa).

In terms of domain architecture, Core-binding (CB) spans 1–103 (MITSFYAFLD…AIKSFARFCV (103 aa)). The Tyr recombinase domain maps to 124-306 (ELPSPLTYEQ…SMKLKKQIHD (183 aa)). Residues arginine 164, lysine 188, histidine 258, arginine 261, and histidine 284 contribute to the active site. The O-(3'-phospho-DNA)-tyrosine intermediate role is filled by tyrosine 293.

This sequence belongs to the 'phage' integrase family. XerC subfamily. In terms of assembly, forms a cyclic heterotetrameric complex composed of two molecules of XerC and two molecules of XerD.

It is found in the cytoplasm. Its function is as follows. Site-specific tyrosine recombinase, which acts by catalyzing the cutting and rejoining of the recombining DNA molecules. The XerC-XerD complex is essential to convert dimers of the bacterial chromosome into monomers to permit their segregation at cell division. It also contributes to the segregational stability of plasmids. This Chlamydia trachomatis serovar L2b (strain UCH-1/proctitis) protein is Tyrosine recombinase XerC.